The following is a 272-amino-acid chain: Dermonecrotic toxin SpeSicTox-betaIB1b (272 aa).

The active site involves His-5. Positions 25 and 27 each coordinate Mg(2+). Catalysis depends on His-41, which acts as the Nucleophile. 2 disulfide bridges follow: Cys-45/Cys-51 and Cys-47/Cys-191. Asp-85 contacts Mg(2+).

The protein belongs to the arthropod phospholipase D family. Class II subfamily. It depends on Mg(2+) as a cofactor. In terms of tissue distribution, expressed by the venom gland.

Its subcellular location is the secreted. The catalysed reaction is an N-(acyl)-sphingosylphosphocholine = an N-(acyl)-sphingosyl-1,3-cyclic phosphate + choline. It catalyses the reaction an N-(acyl)-sphingosylphosphoethanolamine = an N-(acyl)-sphingosyl-1,3-cyclic phosphate + ethanolamine. The enzyme catalyses a 1-acyl-sn-glycero-3-phosphocholine = a 1-acyl-sn-glycero-2,3-cyclic phosphate + choline. It carries out the reaction a 1-acyl-sn-glycero-3-phosphoethanolamine = a 1-acyl-sn-glycero-2,3-cyclic phosphate + ethanolamine. Its function is as follows. Dermonecrotic toxins cleave the phosphodiester linkage between the phosphate and headgroup of certain phospholipids (sphingolipid and lysolipid substrates), forming an alcohol (often choline) and a cyclic phosphate. This toxin acts on sphingomyelin (SM). It may also act on ceramide phosphoethanolamine (CPE), lysophosphatidylcholine (LPC) and lysophosphatidylethanolamine (LPE), but not on lysophosphatidylserine (LPS), and lysophosphatidylglycerol (LPG). It acts by transphosphatidylation, releasing exclusively cyclic phosphate products as second products. Induces dermonecrosis, hemolysis, increased vascular permeability, edema, inflammatory response, and platelet aggregation. The chain is Dermonecrotic toxin SpeSicTox-betaIB1b from Sicarius peruensis (Six-eyed sand spider).